A 329-amino-acid chain; its full sequence is GTP 3',8-cyclase (329 aa).

The Radical SAM core domain occupies 1-229 (MNQIDYLRIS…EGQVRGNGPA (229 aa)). GTP is bound at residue Arg8. [4Fe-4S] cluster contacts are provided by Cys15 and Cys19. Tyr21 serves as a coordination point for S-adenosyl-L-methionine. Position 22 (Cys22) interacts with [4Fe-4S] cluster. Residue Arg60 coordinates GTP. Gly64 is an S-adenosyl-L-methionine binding site. Thr91 contributes to the GTP binding site. Ser115 serves as a coordination point for S-adenosyl-L-methionine. GTP is bound at residue Lys155. An S-adenosyl-L-methionine-binding site is contributed by Met189. [4Fe-4S] cluster is bound by residues Cys252 and Cys255. 257–259 (RLR) is a binding site for GTP. Cys269 lines the [4Fe-4S] cluster pocket.

The protein belongs to the radical SAM superfamily. MoaA family. Monomer and homodimer. It depends on [4Fe-4S] cluster as a cofactor.

It carries out the reaction GTP + AH2 + S-adenosyl-L-methionine = (8S)-3',8-cyclo-7,8-dihydroguanosine 5'-triphosphate + 5'-deoxyadenosine + L-methionine + A + H(+). The protein operates within cofactor biosynthesis; molybdopterin biosynthesis. Its function is as follows. Catalyzes the cyclization of GTP to (8S)-3',8-cyclo-7,8-dihydroguanosine 5'-triphosphate. The chain is GTP 3',8-cyclase from Microcystis aeruginosa (strain NIES-843 / IAM M-2473).